A 170-amino-acid chain; its full sequence is uncharacterized protein (170 aa).

Belongs to the mimivirus L223/L227/L812 family.

This is an uncharacterized protein from Acanthamoeba polyphaga mimivirus (APMV).